We begin with the raw amino-acid sequence, 967 residues long: Leucine--tRNA ligase (967 aa).

The short motif at 43–53 is the 'HIGH' region element; it reads PYLSGHLHVGH. The 'KMSKS' region motif lies at 650–654; sequence KMSKS. Lys653 contacts ATP.

It belongs to the class-I aminoacyl-tRNA synthetase family.

It is found in the cytoplasm. It carries out the reaction tRNA(Leu) + L-leucine + ATP = L-leucyl-tRNA(Leu) + AMP + diphosphate. This Pyrococcus furiosus (strain ATCC 43587 / DSM 3638 / JCM 8422 / Vc1) protein is Leucine--tRNA ligase.